The following is an 816-amino-acid chain: Phosphatidylinositol 4-kinase beta (816 aa).

Disordered regions lie at residues 1–30 (MGDT…GSLL), 101–120 (EDEM…RRRR), and 248–318 (AHRK…SFSS). Residue glycine 2 is modified to N-acetylglycine. The interaction with ACBD3 stretch occupies residues 2–68 (GDTIVEPAPL…VKLLHGGVAI (67 aa)). A PIK helical domain is found at 29-242 (LLSVITEGVG…GTKLRKLILS (214 aa)). Serine 258 is subject to Phosphoserine. At threonine 263 the chain carries Phosphothreonine. Residues serine 266, serine 275, serine 277, serine 284, and serine 294 each carry the phosphoserine modification. 2 stretches are compositionally biased toward polar residues: residues 278–297 (DATA…SNPK) and 306–318 (SSST…SFSS). Position 428 is a phosphoserine (serine 428). The residue at position 438 (threonine 438) is a Phosphothreonine. Serine 511 is modified (phosphoserine). A phosphothreonine mark is found at threonine 517 and threonine 519. In terms of domain architecture, PI3K/PI4K catalytic spans 535 to 801 (EPWQEKVRRI…MVDGSMRSIT (267 aa)). The tract at residues 541-547 (VRRIREG) is G-loop. Positions 668–676 (QVKDRHNGN) are catalytic loop. The interval 687–711 (HIDFGFILSSSPRNLGFETSAFKLT) is activation loop.

The protein belongs to the PI3/PI4-kinase family. Type III PI4K subfamily. As to quaternary structure, interacts with ARF1 and ARF3 in the Golgi complex, but not with ARF4, ARF5 or ARF6. Interacts with NCS1/FREQ in a calcium-independent manner. Interacts with CALN1/CABP8 and CALN2/CABP7; in a calcium-dependent manner; this interaction competes with NCS1/FREQ binding. Interacts with ACBD3. Interacts with ARMH3, YWHAB, YWHAE, YWHAG, YWHAH, YWHAQ, YWHAZ and SFN. Interacts with GGA2 (via VHS domain); the interaction is important for PI4KB location at the Golgi apparatus membrane. Interacts with ATG9A. Mg(2+) is required as a cofactor. Requires Mn(2+) as cofactor.

The protein localises to the endomembrane system. Its subcellular location is the mitochondrion outer membrane. It localises to the rough endoplasmic reticulum membrane. The protein resides in the golgi apparatus. It is found in the golgi apparatus membrane. It carries out the reaction a 1,2-diacyl-sn-glycero-3-phospho-(1D-myo-inositol) + ATP = a 1,2-diacyl-sn-glycero-3-phospho-(1D-myo-inositol 4-phosphate) + ADP + H(+). Inhibited by wortmannin. Increased kinase activity upon interaction with NCS1/FREQ. Functionally, phosphorylates phosphatidylinositol (PI) in the first committed step in the production of the second messenger inositol-1,4,5,-trisphosphate (PIP). May regulate Golgi disintegration/reorganization during mitosis, possibly via its phosphorylation. Involved in Golgi-to-plasma membrane trafficking. In Bos taurus (Bovine), this protein is Phosphatidylinositol 4-kinase beta (PI4KB).